A 119-amino-acid polypeptide reads, in one-letter code: Large ribosomal subunit protein bL20c (119 aa).

It belongs to the bacterial ribosomal protein bL20 family.

The protein resides in the plastid. The protein localises to the chloroplast. Its function is as follows. Binds directly to 23S ribosomal RNA and is necessary for the in vitro assembly process of the 50S ribosomal subunit. It is not involved in the protein synthesizing functions of that subunit. The chain is Large ribosomal subunit protein bL20c (rpl20) from Oryza sativa (Rice).